The following is a 418-amino-acid chain: Histidine--tRNA ligase (418 aa).

The protein belongs to the class-II aminoacyl-tRNA synthetase family.

It is found in the cytoplasm. It catalyses the reaction tRNA(His) + L-histidine + ATP = L-histidyl-tRNA(His) + AMP + diphosphate + H(+). The protein is Histidine--tRNA ligase of Methanococcus vannielii (strain ATCC 35089 / DSM 1224 / JCM 13029 / OCM 148 / SB).